A 552-amino-acid chain; its full sequence is MSQFFFNQRTHLVSDVIDGAIIASPWNNLARLESDPAIRIVVRRDLNKNNVAVISGGGSGHEPAHVGFIGKGMLTAAVCGDVFASPSVDAVLTAIQAVTGEAGCLLIVKNYTGDRLNFGLAAEKARRLGYNVEMLIVGDDISLPDNKHPRGIAGTILVHKIAGYFAERGYNLATVLREAQYAASNTFSLGVALSSCHLPQETDAAPRHHPGHAELGMGIHGEPGASVIDTQNSAQVVNLMVDKLLAALPETGRLAVMINNLGGVSVAEMAIITRELASSPLHSRIDWLIGPASLVTALDMKGFSLTAIVLEESIEKALLTEVETSNWPTPVPPREITCVVSSHASARVEFQPSANALVAGIVELVTATLSDLETHLNALDAKVGDGDTGSTFAAAAREIASLLHRQQLPLNNLATLFALIGERLTVVMGGSSGVLMSIFFTAAGQKLEQGANVVEALNTGLAQMKFYGGADEGDRTMIDALQPALTSLLAQPKNLQAAFDAAQAGAERTCLSSKANAGRASYLSSESLLGNMDPGAQRLAMVFKALAESELG.

The 320-residue stretch at 8–327 (QRTHLVSDVI…LLTEVETSNW (320 aa)) folds into the DhaK domain. Substrate-binding positions include 58 to 61 (GSGH), Lys-109, and Asp-114. Residue His-220 is the Tele-hemiaminal-histidine intermediate of the active site. Positions 356 to 548 (ALVAGIVELV…LAMVFKALAE (193 aa)) constitute a DhaL domain. Residues 385-388 (DGDT), 431-432 (SS), Gly-468, 476-477 (TM), and 533-535 (DPG) each bind ATP.

As to quaternary structure, homodimer. Mg(2+) serves as cofactor. It depends on Ca(2+) as a cofactor.

The enzyme catalyses dihydroxyacetone + ATP = dihydroxyacetone phosphate + ADP + H(+). It participates in polyol metabolism; glycerol fermentation; glycerone phosphate from glycerol (oxidative route): step 2/2. In terms of biological role, catalyzes the phosphorylation of dihydroxyacetone. In Citrobacter freundii, this protein is Dihydroxyacetone kinase (dhaK).